A 78-amino-acid chain; its full sequence is MSTIEERVKKIIGEQLGVKQEEVTNNASFVEDLGADSLDTVELVMALEEEFDTEIPDEEAEKITTVQAAIDYINGHQA.

One can recognise a Carrier domain in the interval 2–77 (STIEERVKKI…AAIDYINGHQ (76 aa)). Ser37 is subject to O-(pantetheine 4'-phosphoryl)serine.

It belongs to the acyl carrier protein (ACP) family. In terms of processing, 4'-phosphopantetheine is transferred from CoA to a specific serine of apo-ACP by AcpS. This modification is essential for activity because fatty acids are bound in thioester linkage to the sulfhydryl of the prosthetic group.

The protein localises to the cytoplasm. It functions in the pathway lipid metabolism; fatty acid biosynthesis. Functionally, carrier of the growing fatty acid chain in fatty acid biosynthesis. The sequence is that of Acyl carrier protein from Shigella flexneri.